The chain runs to 344 residues: Polycomb group RING finger protein 2 (344 aa).

An RING-type zinc finger spans residues Cys18–Asp57. Residues Lys51 and Lys88 each participate in a glycyl lysine isopeptide (Lys-Gly) (interchain with G-Cter in SUMO2) cross-link. Residues Lys81 to Arg95 carry the Nuclear localization signal motif. A compositionally biased stretch (polar residues) spans Thr240–Ala253. A disordered region spans residues Thr240 to Thr344. Low complexity predominate over residues Ala263 to Ala313. Residues Asn314–Ser328 show a composition bias toward polar residues. Thr344 carries the post-translational modification Phosphothreonine.

In terms of assembly, exists as both a monomer and homodimer. Component of a PRC1-like complex. Interacts with CBX8, RING1 and RNF2. Interacts with CBX7. Interacts with PHC2. Phosphorylated. Homodimer formation is regulated by phosphorylation with only unphosphorylated proteins forming homodimers. As to expression, detected in all tissues examined with high expression found in placenta lung and kidney and low expression, in liver, pancreas and skeletal muscle.

The protein localises to the nucleus. Transcriptional repressor. Binds specifically to the DNA sequence 5'-GACTNGACT-3'. Has tumor suppressor activity. May play a role in control of cell proliferation and/or neural cell development. Regulates proliferation of early T progenitor cells by maintaining expression of HES1. Also plays a role in antero-posterior specification of the axial skeleton and negative regulation of the self-renewal activity of hematopoietic stem cells. Component of a Polycomb group (PcG) multiprotein PRC1-like complex, a complex class required to maintain the transcriptionally repressive state of many genes, including Hox genes, throughout development. PcG PRC1 complex acts via chromatin remodeling and modification of histones; it mediates monoubiquitination of histone H2A 'Lys-119', rendering chromatin heritably changed in its expressibility. Within the PRC1-like complex, regulates RNF2 ubiquitin ligase activity. The chain is Polycomb group RING finger protein 2 (PCGF2) from Homo sapiens (Human).